We begin with the raw amino-acid sequence, 513 residues long: uncharacterized protein (513 aa).

Disordered stretches follow at residues 72–113 and 155–262; these read GVVP…TGQF and IMGG…NPRF. A compositionally biased stretch (low complexity) spans 82–106; that stretch reads ANRTANPNTNSNPNPNATNAQPNPT. Polar residues-rich tracts occupy residues 164–189 and 210–228; these read EANS…QTQG and TPLN…EFQQ. Residues 229-238 are compositionally biased toward low complexity; sequence TTSPIFSSSS. The span at 239 to 248 shows a compositional bias: pro residues; the sequence is TPPPPPPRPS. Positions 253–262 are enriched in polar residues; the sequence is GESQNTNPRF. Residues 396–437 form an RING-type; atypical zinc finger; it reads CTICMEMFKINDDVIQLPCKHYFHENCIKPWLRVNGTCAICR. The tract at residues 439 to 513 is disordered; sequence PVDPNSQQRN…DDFVDEEPLE (75 aa). The segment covering 442–493 has biased composition (polar residues); the sequence is PNSQQRNNTSTDSANGHNPSNHANPSTSTTNDQGATLRNESFNAASQSNLSS.

This is an uncharacterized protein from Schizosaccharomyces pombe (strain 972 / ATCC 24843) (Fission yeast).